The chain runs to 150 residues: Translation machinery-associated protein 17 (150 aa).

2 positions are modified to phosphoserine: Ser-24 and Ser-68. The interval Arg-110–Asn-139 is disordered. Over residues Lys-118–Thr-127 the composition is skewed to basic and acidic residues.

As to quaternary structure, interacts with RPT6. Interacts with the 40S and 60S ribosomal subunits.

The protein resides in the cytoplasm. It localises to the nucleus. Its function is as follows. ATPase-dedicated chaperone that assists the formation of the RPT6-RPT3 ATPase pair, an early step in proteasome assembly. Plays a key role in maintaining homeostatic proteasome levels and adjusting proteasome assembly when demands increase, such as during proteasome stresses. Function overlaps with RPN14. This chain is Translation machinery-associated protein 17 (TMA17), found in Saccharomyces cerevisiae (strain ATCC 204508 / S288c) (Baker's yeast).